The primary structure comprises 632 residues: Chaperone protein DnaK (632 aa).

Threonine 198 bears the Phosphothreonine; by autocatalysis mark. Residues 524-557 are disordered; that stretch reads RREAVDAKNHADSLVHSTEKALAEHGSKIEDSER.

It belongs to the heat shock protein 70 family.

Its function is as follows. Acts as a chaperone. In Nitrobacter hamburgensis (strain DSM 10229 / NCIMB 13809 / X14), this protein is Chaperone protein DnaK.